Here is a 610-residue protein sequence, read N- to C-terminus: Elongation factor 4 (610 aa).

The region spanning 14-196 is the tr-type G domain; the sequence is NRIRNFSIIA…ALVANIPPPK (183 aa). GTP-binding positions include 26–31 and 143–146; these read DHGKST and NKID.

The protein belongs to the TRAFAC class translation factor GTPase superfamily. Classic translation factor GTPase family. LepA subfamily.

It localises to the cell inner membrane. It catalyses the reaction GTP + H2O = GDP + phosphate + H(+). Required for accurate and efficient protein synthesis under certain stress conditions. May act as a fidelity factor of the translation reaction, by catalyzing a one-codon backward translocation of tRNAs on improperly translocated ribosomes. Back-translocation proceeds from a post-translocation (POST) complex to a pre-translocation (PRE) complex, thus giving elongation factor G a second chance to translocate the tRNAs correctly. Binds to ribosomes in a GTP-dependent manner. The protein is Elongation factor 4 of Legionella pneumophila (strain Paris).